The chain runs to 404 residues: Aspergillopepsin-1 (404 aa).

Residues 1-20 (MVILSKVAAVAVGLSTVASA) form the signal peptide. Residues 21 to 77 (LPTGPSHSPHARRGFTINQITRQTARVGPKTASFPAIYSRALAKYGGTVPAHLKSAV) constitute a propeptide, activation peptide. The Peptidase A1 domain maps to 95-401 (YLTPVNIGGT…DSQGPRLGFA (307 aa)). Asp-111 is an active-site residue. The N-linked (GlcNAc...) asparagine glycan is linked to Asn-140. Asp-293 is a catalytic residue. Residues Cys-329 and Cys-364 are joined by a disulfide bond.

The protein belongs to the peptidase A1 family. In terms of assembly, monomer.

The protein localises to the secreted. The catalysed reaction is Hydrolysis of proteins with broad specificity. Generally favors hydrophobic residues in P1 and P1', but also accepts Lys in P1, which leads to activation of trypsinogen. Does not clot milk.. In terms of biological role, secreted aspartic endopeptidase that allows assimilation of proteinaceous substrates. The scissile peptide bond is attacked by a nucleophilic water molecule activated by two aspartic residues in the active site. Shows a broad primary substrate specificity. Favors hydrophobic residues at the P1 and P1' positions, but also accepts a lysine residue in the P1 position, leading to the activation of trypsinogen and chymotrypsinogen A. In Aspergillus flavus (strain ATCC 200026 / FGSC A1120 / IAM 13836 / NRRL 3357 / JCM 12722 / SRRC 167), this protein is Aspergillopepsin-1 (pepA).